The sequence spans 620 residues: Cilia- and flagella-associated protein 52 (620 aa).

WD repeat units follow at residues 62-106 (GHGN…LIAR), 109-150 (LHKG…AICG), 156-195 (LNVG…RKIW), 288-327 (QLQG…ETLI), 330-369 (CHFE…ELLR), 372-411 (VPNM…LMYT), 415-454 (AHRI…QKLE), 459-498 (EHKS…RNQM), 500-541 (LANT…RELE), 543-582 (SLSG…VTHV), and 585-620 (GHSG…PFAS).

The protein belongs to the CFAP52 family. In terms of assembly, microtubule inner protein component of sperm flagellar doublet microtubules. Interacts with BRCA2. Interacts with the CCT chaperonin complex. Interacts with HSP70. Interacts with AK8. Interacts with CFAP45. Interacts with DNAI1. Interacts with IQDC.

Its subcellular location is the cytoplasm. It localises to the cytoskeleton. The protein resides in the cilium axoneme. It is found in the flagellum axoneme. Its function is as follows. Microtubule inner protein (MIP) part of the dynein-decorated doublet microtubules (DMTs) in cilia axoneme. Important for proper ciliary and flagellar beating. May act in cooperation with CFAP45 and axonemal dynein subunit DNAH11. May play a role in cell growth and/or survival. The chain is Cilia- and flagella-associated protein 52 from Mus musculus (Mouse).